Here is an 81-residue protein sequence, read N- to C-terminus: Photosystem I iron-sulfur center (81 aa).

2 4Fe-4S ferredoxin-type domains span residues 2–31 (SHSV…MIPW) and 39–68 (IASA…VRVY). Positions 11, 14, 17, 21, 48, 51, 54, and 58 each coordinate [4Fe-4S] cluster.

As to quaternary structure, the eukaryotic PSI reaction center is composed of at least 11 subunits. Requires [4Fe-4S] cluster as cofactor.

It localises to the plastid thylakoid membrane. It catalyses the reaction reduced [plastocyanin] + hnu + oxidized [2Fe-2S]-[ferredoxin] = oxidized [plastocyanin] + reduced [2Fe-2S]-[ferredoxin]. Apoprotein for the two 4Fe-4S centers FA and FB of photosystem I (PSI); essential for photochemical activity. FB is the terminal electron acceptor of PSI, donating electrons to ferredoxin. The C-terminus interacts with PsaA/B/D and helps assemble the protein into the PSI complex. Required for binding of PsaD and PsaE to PSI. PSI is a plastocyanin-ferredoxin oxidoreductase, converting photonic excitation into a charge separation, which transfers an electron from the donor P700 chlorophyll pair to the spectroscopically characterized acceptors A0, A1, FX, FA and FB in turn. The chain is Photosystem I iron-sulfur center from Cuscuta gronovii (Common dodder).